A 141-amino-acid chain; its full sequence is Large ribosomal subunit protein uL11 (141 aa).

It belongs to the universal ribosomal protein uL11 family. Part of the ribosomal stalk of the 50S ribosomal subunit. Interacts with L10 and the large rRNA to form the base of the stalk. L10 forms an elongated spine to which L12 dimers bind in a sequential fashion forming a multimeric L10(L12)X complex. Post-translationally, one or more lysine residues are methylated.

Its function is as follows. Forms part of the ribosomal stalk which helps the ribosome interact with GTP-bound translation factors. This is Large ribosomal subunit protein uL11 from Synechococcus sp. (strain ATCC 27144 / PCC 6301 / SAUG 1402/1) (Anacystis nidulans).